A 529-amino-acid polypeptide reads, in one-letter code: Extracellular signal-regulated kinase 1 (529 aa).

2 disordered regions span residues 1-20 and 100-131; these read MEPE…THQS and QQNQ…SNFN. Residues 8–20 show a composition bias toward polar residues; sequence FQSQMDSDNTHQS. The segment covering 100-117 has biased composition (low complexity); the sequence is QQNQQQQSQQMTQQQLQQ. One can recognise a Protein kinase domain in the interval 149–439; it reads YSIVKCIGHG…EALAHPYFQS (291 aa). Residues 155 to 163 and Lys-178 each bind ATP; that span reads IGHGAYGVV. Asp-275 serves as the catalytic Proton acceptor. Thr-309 carries the phosphothreonine modification. Residues 309-311 carry the TXY motif; it reads TEY. Tyr-311 carries the post-translational modification Phosphotyrosine.

The protein belongs to the protein kinase superfamily. CMGC Ser/Thr protein kinase family. MAP kinase subfamily. Requires Mg(2+) as cofactor. In terms of processing, dually phosphorylated on Thr-309 and Tyr-311, which activates the enzyme.

It catalyses the reaction L-seryl-[protein] + ATP = O-phospho-L-seryl-[protein] + ADP + H(+). It carries out the reaction L-threonyl-[protein] + ATP = O-phospho-L-threonyl-[protein] + ADP + H(+). Activated by tyrosine and threonine phosphorylation. Kinase involved in a signal transduction pathway. The protein is Extracellular signal-regulated kinase 1 (erkA) of Dictyostelium discoideum (Social amoeba).